The chain runs to 135 residues: Ribosome-binding factor A (135 aa).

It belongs to the RbfA family. Monomer. Binds 30S ribosomal subunits, but not 50S ribosomal subunits or 70S ribosomes.

The protein resides in the cytoplasm. In terms of biological role, one of several proteins that assist in the late maturation steps of the functional core of the 30S ribosomal subunit. Associates with free 30S ribosomal subunits (but not with 30S subunits that are part of 70S ribosomes or polysomes). Required for efficient processing of 16S rRNA. May interact with the 5'-terminal helix region of 16S rRNA. This Dinoroseobacter shibae (strain DSM 16493 / NCIMB 14021 / DFL 12) protein is Ribosome-binding factor A.